A 224-amino-acid chain; its full sequence is Flagellar L-ring protein (224 aa).

The N-terminal stretch at 1–15 is a signal peptide; that stretch reads MARYFILAVALLLTA. Cys16 is lipidated: N-palmitoyl cysteine. Cys16 is lipidated: S-diacylglycerol cysteine.

The protein belongs to the FlgH family. As to quaternary structure, the basal body constitutes a major portion of the flagellar organelle and consists of four rings (L,P,S, and M) mounted on a central rod.

It localises to the cell outer membrane. It is found in the bacterial flagellum basal body. Functionally, assembles around the rod to form the L-ring and probably protects the motor/basal body from shearing forces during rotation. This chain is Flagellar L-ring protein, found in Shewanella sp. (strain MR-7).